We begin with the raw amino-acid sequence, 138 residues long: Bis(5'-nucleosyl)-tetraphosphatase [asymmetrical] (138 aa).

The region spanning methionine 1–serine 132 is the Nudix hydrolase domain. The Nudix box motif lies at glycine 37–asparagine 58.

Belongs to the Nudix hydrolase family. In terms of assembly, monomer. Mg(2+) serves as cofactor. The cofactor is Co(2+). Mn(2+) is required as a cofactor. Requires Zn(2+) as cofactor. It depends on Ca(2+) as a cofactor.

It catalyses the reaction P(1),P(4)-bis(5'-adenosyl) tetraphosphate + H2O = AMP + ATP + 2 H(+). Asymmetrically hydrolyzes Ap4A to yield AMP and ATP. The polypeptide is Bis(5'-nucleosyl)-tetraphosphatase [asymmetrical] (ndx-4) (Caenorhabditis elegans).